The sequence spans 136 residues: Peptide methionine sulfoxide reductase MsrB (136 aa).

The MsrB domain occupies 7 to 129; sequence SSSHENTLTE…NSASLSFTDD (123 aa). The Zn(2+) site is built by Cys46, Cys49, Cys95, and Cys98. The Nucleophile role is filled by Cys118.

The protein belongs to the MsrB Met sulfoxide reductase family. Zn(2+) is required as a cofactor.

It carries out the reaction L-methionyl-[protein] + [thioredoxin]-disulfide + H2O = L-methionyl-(R)-S-oxide-[protein] + [thioredoxin]-dithiol. This Erwinia tasmaniensis (strain DSM 17950 / CFBP 7177 / CIP 109463 / NCPPB 4357 / Et1/99) protein is Peptide methionine sulfoxide reductase MsrB.